A 126-amino-acid polypeptide reads, in one-letter code: MPRNDSNQYYARWCCYRRPIRAAFARKGPFNSSSGYEENVARLKNTRSSHCRTARCQFNSSTWTCYFQHVGRKLATAIDYGSPQSIEISEIGAVMHQMSCERLSLSLFSRFACLLARLKTCVLLIN.

This is an uncharacterized protein from Saccharomyces cerevisiae (strain ATCC 204508 / S288c) (Baker's yeast).